The following is a 190-amino-acid chain: LIM domain-containing protein WLIM1 (190 aa).

Ala-2 is subject to N-acetylalanine. Positions 8–68 constitute an LIM zinc-binding 1 domain; sequence QKCMACDKTV…RPHFDQNFKR (61 aa). The interval 74–98 is disordered; the sequence is KSFEGTPKIGKPDRPLEGERPAGTK. The segment covering 83-95 has biased composition (basic and acidic residues); that stretch reads GKPDRPLEGERPA. Residues 108–168 enclose the LIM zinc-binding 2 domain; sequence EKCVGCDKTV…KHHHIQLIKE (61 aa).

As to quaternary structure, interacts with F-actin. In terms of tissue distribution, expressed in roots, leaves, stems, flowers and siliques. Not detected in pollen.

It is found in the cytoplasm. The protein resides in the cytoskeleton. Its function is as follows. Binds to actin filaments and promotes cross-linking into thick bundles. Has an actin-stabilizing activity. The actin regulatory activities are not regulated by pH and [Ca(2+)]. This is LIM domain-containing protein WLIM1 from Arabidopsis thaliana (Mouse-ear cress).